The sequence spans 171 residues: 3-hydroxydecanoyl-[acyl-carrier-protein] dehydratase (171 aa).

The active site involves His70.

Belongs to the thioester dehydratase family. FabA subfamily. Homodimer.

Its subcellular location is the cytoplasm. The catalysed reaction is a (3R)-hydroxyacyl-[ACP] = a (2E)-enoyl-[ACP] + H2O. The enzyme catalyses (3R)-hydroxydecanoyl-[ACP] = (2E)-decenoyl-[ACP] + H2O. It carries out the reaction (2E)-decenoyl-[ACP] = (3Z)-decenoyl-[ACP]. It participates in lipid metabolism; fatty acid biosynthesis. Its function is as follows. Necessary for the introduction of cis unsaturation into fatty acids. Catalyzes the dehydration of (3R)-3-hydroxydecanoyl-ACP to E-(2)-decenoyl-ACP and then its isomerization to Z-(3)-decenoyl-ACP. Can catalyze the dehydratase reaction for beta-hydroxyacyl-ACPs with saturated chain lengths up to 16:0, being most active on intermediate chain length. This is 3-hydroxydecanoyl-[acyl-carrier-protein] dehydratase from Pseudoalteromonas translucida (strain TAC 125).